The chain runs to 597 residues: Golgin subfamily A member 8C (597 aa).

2 disordered regions span residues 1 to 80 (MAEE…VPDS) and 96 to 120 (KQQK…QKAE). Residues 38–50 (TNGSIHETATSGG) show a composition bias toward polar residues. Residues 53–70 (SPGDSSSTSSSLHAPQSP) show a composition bias toward low complexity. 3 coiled-coil regions span residues 81-141 (RSVK…NTDL), 199-255 (EWKL…SQEV), and 296-394 (SEVE…GKRL). A compositionally biased stretch (basic and acidic residues) spans 100 to 120 (KQVEHQLEEEKKANNEKQKAE). Disordered stretches follow at residues 390–422 (LGKR…SGFM), 457–498 (PITK…GVAA), and 549–576 (PVQG…QEHP). The span at 470–483 (PGGGHHQAGPGQGG) shows a compositional bias: gly residues. The span at 553–563 (ETREGSPHDKP) shows a compositional bias: basic and acidic residues.

This sequence belongs to the GOLGA8 family.

This is Golgin subfamily A member 8C (GOLGA8CP) from Homo sapiens (Human).